A 188-amino-acid polypeptide reads, in one-letter code: Ion-translocating oxidoreductase complex subunit B (188 aa).

The tract at residues 1 to 26 (MNGVFLAIGALLPICLAGGALLGYAA) is hydrophobic. The region spanning 32-90 (QGDPVAEQVNALLPQTQCGQCGYPGCKPYAEAIAAGDKINKCPPGGEATIRALADLLDL) is the 4Fe-4S domain. Residues C49, C52, C57, C73, C113, C116, C119, C123, C143, C146, C149, and C153 each contribute to the [4Fe-4S] cluster site. 4Fe-4S ferredoxin-type domains lie at 104–133 (RVAY…GAAR) and 134–163 (LMHT…MRET).

This sequence belongs to the 4Fe4S bacterial-type ferredoxin family. RnfB subfamily. As to quaternary structure, the complex is composed of six subunits: RnfA, RnfB, RnfC, RnfD, RnfE and RnfG. The cofactor is [4Fe-4S] cluster.

It localises to the cell inner membrane. Functionally, part of a membrane-bound complex that couples electron transfer with translocation of ions across the membrane. The chain is Ion-translocating oxidoreductase complex subunit B from Pseudomonas aeruginosa (strain UCBPP-PA14).